The sequence spans 218 residues: MTTSRCSHLPEVLPDCTSSAAPVVKTVEDCGSLVNGQPQYVMQVSAKDGQLLSTVVRTLATQSPFNDRPMCRICHEGSSQEDLLSPCECTGTLGTIHRSCLEHWLSSSNTSYCELCHFRFAVERKPRPLVEWLRNPGPQHEKRTLFGDMVCFLFITPLATISGWLCLRGAVDHLHFSSRLEAVGLIALTVALFTIYLFWTLRRYGHQSKPFWNQSSRS.

The segment at 63-123 (SPFNDRPMCR…ELCHFRFAVE (61 aa)) adopts an RING-CH-type zinc-finger fold. Zn(2+) is bound by residues cysteine 71, cysteine 74, cysteine 87, cysteine 89, histidine 97, cysteine 100, cysteine 113, and cysteine 116. The next 2 membrane-spanning stretches (helical) occupy residues 145–165 (LFGDMVCFLFITPLATISGWL) and 180–200 (LEAVGLIALTVALFTIYLFWT).

As to quaternary structure, interacts with MARCHF2 and STX6.

It localises to the cytoplasmic vesicle membrane. The protein localises to the early endosome membrane. It catalyses the reaction S-ubiquitinyl-[E2 ubiquitin-conjugating enzyme]-L-cysteine + [acceptor protein]-L-lysine = [E2 ubiquitin-conjugating enzyme]-L-cysteine + N(6)-ubiquitinyl-[acceptor protein]-L-lysine.. The protein operates within protein modification; protein ubiquitination. E3 ubiquitin-protein ligase which may be involved in endosomal trafficking. E3 ubiquitin ligases accept ubiquitin from an E2 ubiquitin-conjugating enzyme in the form of a thioester and then directly transfer the ubiquitin to targeted substrates. The protein is E3 ubiquitin-protein ligase MARCHF3 (Marchf3) of Mus musculus (Mouse).